Consider the following 306-residue polypeptide: Tyrosine recombinase XerC (306 aa).

In terms of domain architecture, Core-binding (CB) spans 10–94 (ARCHSYLQQF…AVKQWGEFLL (85 aa)). Positions 115 to 294 (PLPKNIDVDS…DFQHLAKVYD (180 aa)) constitute a Tyr recombinase domain. Catalysis depends on residues Arg-154, Lys-178, His-246, Arg-249, and His-272. The O-(3'-phospho-DNA)-tyrosine intermediate role is filled by Tyr-281.

The protein belongs to the 'phage' integrase family. XerC subfamily. In terms of assembly, forms a cyclic heterotetrameric complex composed of two molecules of XerC and two molecules of XerD.

The protein resides in the cytoplasm. Its function is as follows. Site-specific tyrosine recombinase, which acts by catalyzing the cutting and rejoining of the recombining DNA molecules. The XerC-XerD complex is essential to convert dimers of the bacterial chromosome into monomers to permit their segregation at cell division. It also contributes to the segregational stability of plasmids. The protein is Tyrosine recombinase XerC of Shewanella oneidensis (strain ATCC 700550 / JCM 31522 / CIP 106686 / LMG 19005 / NCIMB 14063 / MR-1).